A 310-amino-acid polypeptide reads, in one-letter code: L-lactate dehydrogenase (310 aa).

Residues 10 to 11 (MV), D32, Y62, and 76 to 77 (GV) each bind NAD(+). Substrate-binding positions include Q79, R85, and 117-120 (NPVD). Residues 115–117 (ATN) and S140 each bind NAD(+). 145–148 (DTAR) contacts substrate. Beta-D-fructose 1,6-bisphosphate is bound by residues R150 and H165. H172 serves as the catalytic Proton acceptor. Phosphotyrosine is present on Y218. T227 provides a ligand contact to substrate.

It belongs to the LDH/MDH superfamily. LDH family. Homotetramer.

It is found in the cytoplasm. The catalysed reaction is (S)-lactate + NAD(+) = pyruvate + NADH + H(+). Its pathway is fermentation; pyruvate fermentation to lactate; (S)-lactate from pyruvate: step 1/1. Allosterically activated by fructose 1,6-bisphosphate (FBP). Its function is as follows. Catalyzes the conversion of lactate to pyruvate. The chain is L-lactate dehydrogenase from Thermus thermophilus (strain ATCC 27634 / DSM 579 / HB8).